Here is a 325-residue protein sequence, read N- to C-terminus: uncharacterized protein (325 aa).

Disordered stretches follow at residues 32–65 (LSTP…VPPI) and 99–152 (GDSL…ASSG). Positions 153–291 (LVPSLNRLRI…LFTGVRDGYY (139 aa)) constitute a Globin domain.

This is an uncharacterized protein from Caenorhabditis elegans.